The primary structure comprises 578 residues: MCGILAVLGCIDNSQAKRSRIIELSRRLRHRGPDWSGLHCYEDCYLAHERLAIIDPTSGDQPLYNEDKTVAVTVNGEIYNHKILREKLKSHQFRTGSDCEVIAHLYEEHGEEFIDMLDGMFAFVLLDTRDKSFIAARDAIGITPLYIGWGLDGSVWFASEMKALSDDCEQFMSFPPGHIYSSKQGGLRRWYNPPWYNEQVPSTPYDPLVLRNAFEKAVIKRLMTDVPFGVLLSGGLDSSLVAAVALRHLEKSEAARQWGSQLHTFCIGLQGSPDLKAGREVADYLGTRHHEFQFTVQDGIDAIEEVIYHIETYDVTTIRASTPMFLMSRKIKSLGVKMVLSGEGSDEILGGYLYFHKAPNKKEFHEETCRKIKALHQFDCLRANKSTSAWGVEARVPFLDKEFLNVAMSIDPEWKLIKPDLGRIEKWVLRNAFDDEERPYLPKHILYRQKEQFSDGVGYSWIDGLKDHANKHVSDTMLSNASFVFPDNTPLTKEAYYYRTIFEKFFPKSAARATVPGGPSIACSTAKAVEWDATWSKNLDPSGRAALGVHVAAYEEDKAAAAAKAGSDLVDPLPKNGT.

Cys2 acts as the For GATase activity in catalysis. The 184-residue stretch at 2–185 (CGILAVLGCI…PGHIYSSKQG (184 aa)) folds into the Glutamine amidotransferase type-2 domain. L-glutamine is bound by residues 50-54 (RLAII), 75-77 (NGE), and Asp98. The Asparagine synthetase domain maps to 210 to 450 (LRNAFEKAVI…LPKHILYRQK (241 aa)). ATP contacts are provided by residues Leu231, Ile267, and 341–342 (SG).

As to expression, expressed in the vascular region adjacent to leaf mesophyll cells in the companion cell-sieve tube element complex.

The enzyme catalyses L-aspartate + L-glutamine + ATP + H2O = L-asparagine + L-glutamate + AMP + diphosphate + H(+). Its pathway is amino-acid biosynthesis; L-asparagine biosynthesis. In terms of biological role, essential for nitrogen assimilation, distribution and remobilization within the plant via the phloem. This chain is Asparagine synthetase [glutamine-hydrolyzing] 2 (ASN2), found in Arabidopsis thaliana (Mouse-ear cress).